The sequence spans 90 residues: Probable Fe(2+)-trafficking protein (90 aa).

The protein belongs to the Fe(2+)-trafficking protein family. As to quaternary structure, monomer.

Could be a mediator in iron transactions between iron acquisition and iron-requiring processes, such as synthesis and/or repair of Fe-S clusters in biosynthetic enzymes. This chain is Probable Fe(2+)-trafficking protein, found in Sodalis glossinidius (strain morsitans).